We begin with the raw amino-acid sequence, 511 residues long: Bifunctional purine biosynthesis protein PurH (511 aa).

Residues 1 to 147 (MIQIKRALIS…KNYKHTLVLT (147 aa)) form the MGS-like domain.

This sequence belongs to the PurH family.

It carries out the reaction (6R)-10-formyltetrahydrofolate + 5-amino-1-(5-phospho-beta-D-ribosyl)imidazole-4-carboxamide = 5-formamido-1-(5-phospho-D-ribosyl)imidazole-4-carboxamide + (6S)-5,6,7,8-tetrahydrofolate. The catalysed reaction is IMP + H2O = 5-formamido-1-(5-phospho-D-ribosyl)imidazole-4-carboxamide. It functions in the pathway purine metabolism; IMP biosynthesis via de novo pathway; 5-formamido-1-(5-phospho-D-ribosyl)imidazole-4-carboxamide from 5-amino-1-(5-phospho-D-ribosyl)imidazole-4-carboxamide (10-formyl THF route): step 1/1. Its pathway is purine metabolism; IMP biosynthesis via de novo pathway; IMP from 5-formamido-1-(5-phospho-D-ribosyl)imidazole-4-carboxamide: step 1/1. The chain is Bifunctional purine biosynthesis protein PurH from Leptospira borgpetersenii serovar Hardjo-bovis (strain JB197).